A 147-amino-acid chain; its full sequence is Large ribosomal subunit protein uL15 (147 aa).

The disordered stretch occupies residues 1–58; that stretch reads MRLHDLKPAEGSTKKKKRVGRGIGSGHGKTSGRGHKGQNARSGGGVRPGFEGGQMPLT. A compositionally biased stretch (gly residues) spans 42–52; it reads SGGGVRPGFEG.

Belongs to the universal ribosomal protein uL15 family. Part of the 50S ribosomal subunit.

Functionally, binds to the 23S rRNA. The chain is Large ribosomal subunit protein uL15 from Caldanaerobacter subterraneus subsp. tengcongensis (strain DSM 15242 / JCM 11007 / NBRC 100824 / MB4) (Thermoanaerobacter tengcongensis).